Reading from the N-terminus, the 523-residue chain is MTNIHNHKILILDFGSQYTQLIARRVREIGVYCELWAWDVTEEQIREFAPTGIILSGSPESTTEENSPRAPEYVFNAGVPVLGVCYGMQTMAMQLGGLTETSDHREFGYASVSLENSTALFANLNDNLTASEPKLDVWMSHGDKVTRLPQNFQVTGTTPTCPIAAMSDESRRFYGVQFHPEVTHTKKGLELLTNFVVNICGCETKWTAENIIEDAVARIKEQVGDDEVILGLSGGVDSSVVALLLHRAIGKNLHCVFVDNGLLRLHEGDQVMEMFGDKFGLNITRVDAESRFLGELAGVSDPEAKRKIIGKVFVDVFDDESKKLTNVKWLAQGTIYPDVIESAASKTGKAHVIKSHHNVGGLPDYMKLGLVEPLRELFKDEVRKIGLALGLPAEMINRHPFPGPGLGVRVLGEVKKEYCDLLRRADAIFIEELRNSGWYEKTSQAFSVFLPVKSVGVMGDGRKYDWVISLRAVETIDFMTAHWAHLPYDLLGKVSNRIINEVNGISRVVYDISGKPPATIEWE.

Residues 8–205 (KILILDFGSQ…VVNICGCETK (198 aa)) enclose the Glutamine amidotransferase type-1 domain. The active-site Nucleophile is the C85. Active-site residues include H179 and E181. One can recognise a GMPS ATP-PPase domain in the interval 206 to 398 (WTAENIIEDA…LGLPAEMINR (193 aa)). ATP is bound at residue 233–239 (SGGVDSS).

Homodimer.

It catalyses the reaction XMP + L-glutamine + ATP + H2O = GMP + L-glutamate + AMP + diphosphate + 2 H(+). Its pathway is purine metabolism; GMP biosynthesis; GMP from XMP (L-Gln route): step 1/1. Functionally, catalyzes the synthesis of GMP from XMP. The chain is GMP synthase [glutamine-hydrolyzing] from Haemophilus influenzae (strain PittEE).